The chain runs to 90 residues: Protein Z600 (90 aa).

Threonine 22 and threonine 48 each carry phosphothreonine. Residues 46–65 (PATPSSSGHGKFQTELKKRR) are disordered.

As to quaternary structure, component of the Frs-CycA-Cdk1 complex composed of Z600, CycA and Cdk1. Interacts preferentially with CycA (via C-terminus) but is also able to interact (via C-terminus) with CycE (via C-terminus).

It localises to the nucleus. In terms of biological role, cell cycle regulator that is involved in modulating and adjusting cell proliferation according to the requirements of the developmental program. Interacts with mitotic Cdk1-cyclin complexes to inhibit mitotic entry at the G2/M transition. Likely to function by binding to the hydrophobic patch of cyclins to interfere with the interaction between the complex and certain Cdk1 substrates. At the mid-blastula transition, involved in the cell cycle arrest in G2 of cycle 14 by delaying mitosis and thus reducing cell proliferation allowing cell fate specification and morphogenesis to take place. Acts downstream or in parallel to the checkpoint regulator grp which is also required for the cell cycle pause at cycle 14. During gastrulation, delays mitosis in the ventral region of the embryonic mesoderm thus allowing invagination to be completed before cell division takes place. The chain is Protein Z600 from Drosophila melanogaster (Fruit fly).